Consider the following 291-residue polypeptide: Phosphatidylserine decarboxylase proenzyme (291 aa).

Residues aspartate 90, histidine 147, and serine 253 each act as charge relay system; for autoendoproteolytic cleavage activity in the active site. Catalysis depends on serine 253, which acts as the Schiff-base intermediate with substrate; via pyruvic acid; for decarboxylase activity. A Pyruvic acid (Ser); by autocatalysis modification is found at serine 253.

Belongs to the phosphatidylserine decarboxylase family. PSD-B subfamily. Prokaryotic type I sub-subfamily. Heterodimer of a large membrane-associated beta subunit and a small pyruvoyl-containing alpha subunit. It depends on pyruvate as a cofactor. Post-translationally, is synthesized initially as an inactive proenzyme. Formation of the active enzyme involves a self-maturation process in which the active site pyruvoyl group is generated from an internal serine residue via an autocatalytic post-translational modification. Two non-identical subunits are generated from the proenzyme in this reaction, and the pyruvate is formed at the N-terminus of the alpha chain, which is derived from the carboxyl end of the proenzyme. The autoendoproteolytic cleavage occurs by a canonical serine protease mechanism, in which the side chain hydroxyl group of the serine supplies its oxygen atom to form the C-terminus of the beta chain, while the remainder of the serine residue undergoes an oxidative deamination to produce ammonia and the pyruvoyl prosthetic group on the alpha chain. During this reaction, the Ser that is part of the protease active site of the proenzyme becomes the pyruvoyl prosthetic group, which constitutes an essential element of the active site of the mature decarboxylase.

The protein resides in the cell membrane. The catalysed reaction is a 1,2-diacyl-sn-glycero-3-phospho-L-serine + H(+) = a 1,2-diacyl-sn-glycero-3-phosphoethanolamine + CO2. It participates in phospholipid metabolism; phosphatidylethanolamine biosynthesis; phosphatidylethanolamine from CDP-diacylglycerol: step 2/2. Catalyzes the formation of phosphatidylethanolamine (PtdEtn) from phosphatidylserine (PtdSer). The sequence is that of Phosphatidylserine decarboxylase proenzyme from Photobacterium profundum (strain SS9).